Consider the following 303-residue polypeptide: S-methyl-5'-thioadenosine phosphorylase 1 (303 aa).

Residues S14, 57-58, and 90-91 each bind phosphate; these read RH and SA. M198 is a substrate binding site. Phosphate is bound at residue S199. Residue 222–224 participates in substrate binding; it reads DYD.

Belongs to the PNP/MTAP phosphorylase family. MTAP subfamily. In terms of assembly, homotrimer.

The protein localises to the cytoplasm. It localises to the nucleus. The enzyme catalyses S-methyl-5'-thioadenosine + phosphate = 5-(methylsulfanyl)-alpha-D-ribose 1-phosphate + adenine. It functions in the pathway amino-acid biosynthesis; L-methionine biosynthesis via salvage pathway; S-methyl-5-thio-alpha-D-ribose 1-phosphate from S-methyl-5'-thioadenosine (phosphorylase route): step 1/1. Its function is as follows. Catalyzes the reversible phosphorylation of S-methyl-5'-thioadenosine (MTA) to adenine and 5-methylthioribose-1-phosphate. Involved in the breakdown of MTA, a major by-product of polyamine biosynthesis. Responsible for the first step in the methionine salvage pathway after MTA has been generated from S-adenosylmethionine. Has broad substrate specificity with 6-aminopurine nucleosides as preferred substrates. This chain is S-methyl-5'-thioadenosine phosphorylase 1, found in Puccinia graminis f. sp. tritici (strain CRL 75-36-700-3 / race SCCL) (Black stem rust fungus).